Reading from the N-terminus, the 301-residue chain is Putative hydro-lyase C5H10.01 (301 aa).

This sequence belongs to the D-glutamate cyclase family.

The chain is Putative hydro-lyase C5H10.01 from Schizosaccharomyces pombe (strain 972 / ATCC 24843) (Fission yeast).